The sequence spans 338 residues: Palmitoyltransferase ZDHHC15 (338 aa).

At 1 to 20 the chain is on the cytoplasmic side; that stretch reads MLAGCRVALPRGLRCCQRVL. A helical transmembrane segment spans residues 21–41; sequence SWVPVVIISLVVLWSYYAYVW. At 42 to 56 the chain is on the lumenal side; sequence ELCLVTVTNPAEKAA. A helical membrane pass occupies residues 57-77; it reads YLLIFHTVFLLFIWTYWKAIF. Residues 78–172 lie on the Cytoplasmic side of the membrane; it reads TPPKQPTKKF…NNCIGYSNYK (95 aa). In terms of domain architecture, DHHC spans 129–179; that stretch reads RFCDTCQMVKPDRCHHCSVCGMCVLKMDHHCPWVNNCIGYSNYKFFLLFLA. Cys131, Cys134, His144, Cys145, Cys148, Cys151, and His158 together coordinate Zn(2+). Cys159 acts as the S-palmitoyl cysteine intermediate in catalysis. A Zn(2+)-binding site is contributed by Cys165. Residues 173–193 traverse the membrane as a helical segment; it reads FFLLFLAYAMLYCLYIGCTVF. Residues 194–210 lie on the Lumenal side of the membrane; that stretch reads QYFILYWTDTLSNGRAK. A helical membrane pass occupies residues 211–234; it reads FHVLFLLFVALMFFISLMFLFGYH. The Cytoplasmic portion of the chain corresponds to 235–338; the sequence is CWLVSLNRTT…TSHITVHIEK (104 aa).

The protein belongs to the DHHC palmitoyltransferase family. Autopalmitoylated (in vitro).

It is found in the golgi apparatus membrane. Its subcellular location is the postsynaptic density. It catalyses the reaction L-cysteinyl-[protein] + hexadecanoyl-CoA = S-hexadecanoyl-L-cysteinyl-[protein] + CoA. The catalysed reaction is L-cysteinyl-[protein] + tetradecanoyl-CoA = S-tetradecanoyl-L-cysteinyl-[protein] + CoA. The enzyme catalyses L-cysteinyl-[protein] + octadecanoyl-CoA = S-octadecanoyl-L-cysteinyl-[protein] + CoA. In terms of biological role, palmitoyltransferase that catalyzes the addition of palmitate onto various protein substrates. Has no stringent fatty acid selectivity and in addition to palmitate can also transfer onto target proteins myristate from tetradecanoyl-CoA and stearate from octadecanoyl-CoA. May thereby regulate target proteins association and localization to membranes. In the nervous system, probably catalyzes the palmitoylation of synaptic proteins and is involved in the differentiation of dopaminergic neurons and the development of the diencephalon. The protein is Palmitoyltransferase ZDHHC15 (zdhhc15) of Xenopus laevis (African clawed frog).